The following is a 137-amino-acid chain: Phosphoribosyl-AMP cyclohydrolase (137 aa).

Asp84 serves as a coordination point for Mg(2+). A Zn(2+)-binding site is contributed by Cys85. Asp86 and Asp88 together coordinate Mg(2+). Positions 101 and 108 each coordinate Zn(2+).

The protein belongs to the PRA-CH family. In terms of assembly, homodimer. Requires Mg(2+) as cofactor. Zn(2+) serves as cofactor.

Its subcellular location is the cytoplasm. The catalysed reaction is 1-(5-phospho-beta-D-ribosyl)-5'-AMP + H2O = 1-(5-phospho-beta-D-ribosyl)-5-[(5-phospho-beta-D-ribosylamino)methylideneamino]imidazole-4-carboxamide. It participates in amino-acid biosynthesis; L-histidine biosynthesis; L-histidine from 5-phospho-alpha-D-ribose 1-diphosphate: step 3/9. Functionally, catalyzes the hydrolysis of the adenine ring of phosphoribosyl-AMP. The protein is Phosphoribosyl-AMP cyclohydrolase of Prosthecochloris aestuarii (strain DSM 271 / SK 413).